The following is an 86-amino-acid chain: Small ribosomal subunit protein eS27 (86 aa).

The C4-type zinc-finger motif lies at 39–61 (CQGCFNITTVFSHSQTVVVCPGC).

It belongs to the eukaryotic ribosomal protein eS27 family. Zn(2+) is required as a cofactor.

In Hordeum vulgare (Barley), this protein is Small ribosomal subunit protein eS27 (RPS27).